We begin with the raw amino-acid sequence, 285 residues long: Phosphatidate cytidylyltransferase (285 aa).

8 helical membrane passes run 10–30 (FVLIPVVIAALFLLPPVGFAI), 56–76 (VWLAVLCGLLLALMLFLLPEY), 93–113 (LGWWIVALLLVLFYPGSAAIW), 121–141 (LIFGVLTIVPFFWGMLALRAW), 151–171 (AIWLLYVMILVWGADSGAYMF), 190–210 (WQGFIGGLATAAVISWGYGMW), 213–233 (LDVAPVTLLICSIVAALASVL), and 264–284 (IDSLTAAVPVFACLLLLVFRT).

Belongs to the CDS family.

The protein resides in the cell inner membrane. The enzyme catalyses a 1,2-diacyl-sn-glycero-3-phosphate + CTP + H(+) = a CDP-1,2-diacyl-sn-glycerol + diphosphate. It functions in the pathway phospholipid metabolism; CDP-diacylglycerol biosynthesis; CDP-diacylglycerol from sn-glycerol 3-phosphate: step 3/3. The polypeptide is Phosphatidate cytidylyltransferase (cdsA) (Escherichia coli O157:H7).